The sequence spans 470 residues: 3-isopropylmalate dehydratase large subunit (470 aa).

The [4Fe-4S] cluster site is built by Cys-349, Cys-409, and Cys-412.

Belongs to the aconitase/IPM isomerase family. LeuC type 1 subfamily. Heterodimer of LeuC and LeuD. The cofactor is [4Fe-4S] cluster.

It carries out the reaction (2R,3S)-3-isopropylmalate = (2S)-2-isopropylmalate. It participates in amino-acid biosynthesis; L-leucine biosynthesis; L-leucine from 3-methyl-2-oxobutanoate: step 2/4. Functionally, catalyzes the isomerization between 2-isopropylmalate and 3-isopropylmalate, via the formation of 2-isopropylmaleate. The polypeptide is 3-isopropylmalate dehydratase large subunit (Methylobacterium radiotolerans (strain ATCC 27329 / DSM 1819 / JCM 2831 / NBRC 15690 / NCIMB 10815 / 0-1)).